The following is a 245-amino-acid chain: 14-3-3 protein zeta/delta (245 aa).

Residue methionine 1 is modified to N-acetylmethionine. Residue lysine 3 is modified to N6-acetyllysine. The residue at position 58 (serine 58) is a Phosphoserine; by PKA. Position 68 is an N6-acetyllysine (lysine 68). Serine 184, serine 207, and serine 210 each carry phosphoserine. Threonine 232 bears the Phosphothreonine; by CK1 mark.

This sequence belongs to the 14-3-3 family. As to quaternary structure, homodimer. Heterodimerizes with YWHAE. Homo- and heterodimerization is inhibited by phosphorylation on Ser-58. Interacts with FOXO4, NOXA1, SSH1 and ARHGEF2. Interacts with CDK16 and with WEE1 (C-terminal). Interacts with MLF1 (phosphorylated form); the interaction retains it in the cytoplasm. Interacts with BSPRY. Interacts with Thr-phosphorylated ITGB2. Interacts with Pseudomonas aeruginosa exoS (unphosphorylated form). Interacts with BAX; the interaction occurs in the cytoplasm. Under stress conditions, MAPK8-mediated phosphorylation releases BAX to mitochondria. Interacts with phosphorylated RAF1; the interaction is inhibited when YWHAZ is phosphorylated on Thr-232. Interacts with TP53; the interaction enhances p53 transcriptional activity. The Ser-58 phosphorylated form inhibits this interaction and p53 transcriptional activity. Interacts with ABL1 (phosphorylated form); the interaction retains ABL1 in the cytoplasm. Interacts with PKA-phosphorylated AANAT; the interaction modulates AANAT enzymatic activity by increasing affinity for arylalkylamines and acetyl-CoA and protecting the enzyme from dephosphorylation and proteasomal degradation. It may also prevent thiol-dependent inactivation. Interacts with AKT1; the interaction phosphorylates YWHAZ and modulates dimerization. Interacts with GAB2. Interacts with SAMSN1. Interacts with BCL2L11 and TLK2. Interacts with the 'Thr-369' phosphorylated form of DAPK2. Interacts with PI4KB, TBC1D22A and TBC1D22B. Interacts with ZFP36L1 (via phosphorylated form); this interaction occurs in a p38 MAPK- and AKT-signaling pathways. Interacts with SLITRK1. Interacts with AK5, LDB1, MADD, PDE1A and SMARCB1. Interacts with ARHGEF7 and GIT1. Interacts with MEFV. Interacts with ADAM22 (via C-terminus). In terms of processing, the delta, brain-specific form differs from the zeta form in being phosphorylated. Phosphorylation on Ser-184 by MAPK8; promotes dissociation of BAX and translocation of BAX to mitochondria. Phosphorylation on Thr-232; inhibits binding of RAF1. Phosphorylated on Ser-58 by PKA and protein kinase C delta type catalytic subunit in a sphingosine-dependent fashion. Phosphorylation on Ser-58 by PKA; disrupts homodimerization and heterodimerization with YHAE and TP53.

The protein resides in the cytoplasm. It localises to the melanosome. Its function is as follows. Adapter protein implicated in the regulation of a large spectrum of both general and specialized signaling pathways. Binds to a large number of partners, usually by recognition of a phosphoserine or phosphothreonine motif. Binding generally results in the modulation of the activity of the binding partner. Promotes cytosolic retention and inactivation of TFEB transcription factor by binding to phosphorylated TFEB. Induces ARHGEF7 activity on RAC1 as well as lamellipodia and membrane ruffle formation. In neurons, regulates spine maturation through the modulation of ARHGEF7 activity. The polypeptide is 14-3-3 protein zeta/delta (Ywhaz) (Mus musculus (Mouse)).